The sequence spans 504 residues: Glycerol kinase (504 aa).

Position 14 (Thr14) interacts with ADP. ATP contacts are provided by Thr14, Thr15, and Ser16. Thr14 is a binding site for sn-glycerol 3-phosphate. Arg18 is an ADP binding site. 3 residues coordinate sn-glycerol 3-phosphate: Arg84, Glu85, and Tyr136. Residues Arg84, Glu85, and Tyr136 each contribute to the glycerol site. A Phosphohistidine; by HPr modification is found at His232. Asp246 contacts sn-glycerol 3-phosphate. Residues Asp246 and Gln247 each coordinate glycerol. ADP is bound by residues Thr268 and Gly311. ATP is bound by residues Thr268, Gly311, Gln315, and Gly412. ADP contacts are provided by Gly412 and Asn416.

The protein belongs to the FGGY kinase family. As to quaternary structure, homotetramer and homodimer (in equilibrium). Post-translationally, the phosphoenolpyruvate-dependent sugar phosphotransferase system (PTS), including enzyme I, and histidine-containing protein (HPr) are required for the phosphorylation, which leads to the activation of the enzyme.

The catalysed reaction is glycerol + ATP = sn-glycerol 3-phosphate + ADP + H(+). The protein operates within polyol metabolism; glycerol degradation via glycerol kinase pathway; sn-glycerol 3-phosphate from glycerol: step 1/1. Activated by phosphorylation and inhibited by fructose 1,6-bisphosphate (FBP). Its function is as follows. Key enzyme in the regulation of glycerol uptake and metabolism. Catalyzes the phosphorylation of glycerol to yield sn-glycerol 3-phosphate. The sequence is that of Glycerol kinase from Streptococcus pyogenes serotype M6 (strain ATCC BAA-946 / MGAS10394).